Consider the following 68-residue polypeptide: Defensin gallicin (68 aa).

Positions 1–16 are cleaved as a signal peptide; sequence MWIESDAGVAIDRHAR.

Contains 5 disulfide bonds. In terms of tissue distribution, expressed in hemolymph, gills, digestive gland, foot, adductor muscles and mantle.

The protein resides in the secreted. Its subcellular location is the target cell membrane. Functionally, shows antibacterial activity against numerous Gram-positive bacteria. It selectively inhibits peptidoglycan biosynthesis through complex formation with the cell wall precursor lipid II (1:1 molar ratio) thus inhibiting cell wall synthesis. The protein is Defensin gallicin of Mytilus galloprovincialis (Mediterranean mussel).